The following is a 71-amino-acid chain: AGEECDCGSPANPCCDAATCKLRPGAQCADGLCCDQCRFIKKGTVCRPARGDWNDDTCTGQSADCPRNPFH.

Residues 1–71 (AGEECDCGSP…SADCPRNPFH (71 aa)) form the Disintegrin domain. Disulfide bonds link Cys5/Cys20, Cys7/Cys15, Cys14/Cys37, Cys28/Cys34, Cys33/Cys58, and Cys46/Cys65. Positions 50–52 (RGD) match the Cell attachment site motif.

It belongs to the venom metalloproteinase (M12B) family. P-II subfamily. P-IIa sub-subfamily. As to quaternary structure, monomer. As to expression, expressed by the venom gland.

It localises to the secreted. Inhibits ADP- (IC(50)=56 nM) and collagen-induced (IC(50)=49 nM) aggregation of human platelets. In vitro, inhibits adhesion of endothelial cells to vitronectin, type-I collagen and, to a lower degree, fibronectin and laminin. This chain is Disintegrin simusmin, found in Crotalus simus (Central American rattlesnake).